Here is a 309-residue protein sequence, read N- to C-terminus: 5-formyl-3-hydroxy-2-methylpyridine 4-carboxylate 5-dehydrogenase (309 aa).

Residues 12 to 13, Asp32, 87 to 89, and Lys94 each bind NAD(+); these read TM and VPE.

It belongs to the 3-hydroxyacyl-CoA dehydrogenase family. Homodimer.

The catalysed reaction is 5-formyl-3-hydroxy-2-methylpyridine-4-carboxylate + NAD(+) + H2O = 5-hydroxy-6-methylpyridine-3,4-dicarboxylate + NADH + 2 H(+). The enzyme catalyses 5-formyl-3-hydroxy-2-methylpyridine-4-carboxylate + NADH + H(+) = 4-pyridoxate + NAD(+). The protein operates within cofactor degradation; B6 vitamer degradation. Involved in the degradation of pyridoxine (vitamin B(6)). Catalyzes the oxidation of 5-formyl-3-hydroxy-2-methylpyridine-4-carboxylate (FHMPC) by NAD(+) to 5-hydroxy-6-methylpyridine-3,4-dicarboxylate (HMPDC). Can also catalyze the reduction of FHMPC by NADH to 4-pyridoxic acid. The polypeptide is 5-formyl-3-hydroxy-2-methylpyridine 4-carboxylate 5-dehydrogenase (Mesorhizobium japonicum (strain LMG 29417 / CECT 9101 / MAFF 303099) (Mesorhizobium loti (strain MAFF 303099))).